The sequence spans 141 residues: Nucleoside diphosphate kinase (141 aa).

ATP contacts are provided by K11, F59, R87, T93, R104, and N114. The active-site Pros-phosphohistidine intermediate is the H117.

It belongs to the NDK family. Homotetramer. Mg(2+) serves as cofactor.

Its subcellular location is the cytoplasm. The enzyme catalyses a 2'-deoxyribonucleoside 5'-diphosphate + ATP = a 2'-deoxyribonucleoside 5'-triphosphate + ADP. The catalysed reaction is a ribonucleoside 5'-diphosphate + ATP = a ribonucleoside 5'-triphosphate + ADP. Functionally, major role in the synthesis of nucleoside triphosphates other than ATP. The ATP gamma phosphate is transferred to the NDP beta phosphate via a ping-pong mechanism, using a phosphorylated active-site intermediate. The protein is Nucleoside diphosphate kinase of Xylella fastidiosa (strain 9a5c).